Reading from the N-terminus, the 709-residue chain is Early transcription factor 82 kDa subunit (709 aa).

It belongs to the poxviridae VETF large subunit family. In terms of assembly, heterodimer of a 70 kDa and a 82 kDa subunit. Part of the early transcription complex composed of ETF, RAP94, and the DNA-directed RNA polymerase.

Its subcellular location is the virion. Acts with RNA polymerase to initiate transcription from early gene promoters. Is recruited by the RPO-associated protein of 94 kDa (RAP94) to form the early transcription complex, which also contains the core RNA polymerase. ETF heterodimer binds to early gene promoters. This is Early transcription factor 82 kDa subunit (VETFL) from Vertebrata (FPV).